The chain runs to 378 residues: Leukosialin (378 aa).

The signal sequence occupies residues Trp-1–Gln-7. Residues Glu-8–Gly-231 lie on the Extracellular side of the membrane. O-linked (GalNAc...) threonine glycosylation is found at Thr-13, Thr-15, and Thr-20. Residues Thr-13–Ser-33 are disordered. 3 O-linked (GalNAc...) serine glycosylation sites follow: Ser-23, Ser-25, and Ser-27. Thr-28 is a glycosylation site (O-linked (GalNAc...) threonine). 2 O-linked (GalNAc...) serine glycosylation sites follow: Ser-29 and Ser-33. An O-linked (GalNAc...) threonine glycan is attached at Thr-34. Residues Ser-36 and Ser-37 are each glycosylated (O-linked (GalNAc...) serine). An O-linked (GalNAc...) threonine glycan is attached at Thr-40. 2 O-linked (GalNAc...) serine glycosylation sites follow: Ser-108 and Ser-113. Thr-118, Thr-120, and Thr-124 each carry an O-linked (GalNAc...) threonine glycan. Residues Ser-125 and Ser-126 are each glycosylated (O-linked (GalNAc...) serine). Thr-174 carries an O-linked (GalNAc...) threonine glycan. Ser-176 and Ser-180 each carry an O-linked (GalNAc...) serine glycan. An O-linked (GalNAc...) threonine glycan is attached at Thr-183. The O-linked (GalNAc...) serine glycan is linked to Ser-187. The O-linked (GalNAc...) threonine glycan is linked to Thr-189. A helical transmembrane segment spans residues Met-232–Trp-254. The tract at residues Arg-255–Arg-285 is required for interaction with EZR, MSN and RDX and for co-localization to microvilli. Residues Arg-255 to Leu-378 lie on the Cytoplasmic side of the membrane. The Nuclear localization signal motif lies at Lys-259–Arg-273. The tract at residues Leu-265–Leu-378 is disordered. A Phosphoserine modification is found at Ser-268. Thr-276 carries the phosphothreonine modification. A compositionally biased stretch (polar residues) spans Gly-310–Phe-321. Ser-311 carries the phosphoserine modification. Phosphothreonine is present on Thr-316. Phosphoserine occurs at positions 322 and 326. The residue at position 330 (Ser-330) is a Phosphoserine; by PKC/PRKCQ. Phosphoserine is present on Ser-354. The residue at position 361 (Thr-361) is a Phosphothreonine.

As to quaternary structure, interacts with SIGLEC1. Monomer. Interacts with CTNNB1. Interacts with EZR, MSN and RDX (via FERM domain). Post-translationally, has a high content of sialic acid and O-linked carbohydrate structures. In terms of processing, phosphorylation at Ser-330 is regulated by chemokines, requires its association with ERM proteins (EZR, RDX and MSN) and is essential for its function in the regulation of T-cell trafficking to lymph nodes. Cleavage by CTSG releases its extracellular domain and triggers its intramembrane proteolysis by gamma-secretase releasing the CD43 cytoplasmic tail chain (CD43-ct) which translocates to the nucleus. Post-translationally, sumoylated. As to expression, cell surface of thymocytes, T-lymphocytes, neutrophils, plasma cells and myelomas.

It localises to the membrane. Its subcellular location is the cell projection. The protein localises to the microvillus. The protein resides in the uropodium. It is found in the nucleus. It localises to the PML body. Functionally, predominant cell surface sialoprotein of leukocytes which regulates multiple T-cell functions, including T-cell activation, proliferation, differentiation, trafficking and migration. Positively regulates T-cell trafficking to lymph-nodes via its association with ERM proteins (EZR, RDX and MSN). Negatively regulates Th2 cell differentiation and predisposes the differentiation of T-cells towards a Th1 lineage commitment. Promotes the expression of IFN-gamma by T-cells during T-cell receptor (TCR) activation of naive cells and induces the expression of IFN-gamma by CD4(+) T-cells and to a lesser extent by CD8(+) T-cells. Plays a role in preparing T-cells for cytokine sensing and differentiation into effector cells by inducing the expression of cytokine receptors IFNGR and IL4R, promoting IFNGR and IL4R signaling and by mediating the clustering of IFNGR with TCR. Acts as a major E-selectin ligand responsible for Th17 cell rolling on activated vasculature and recruitment during inflammation. Mediates Th17 cells, but not Th1 cells, adhesion to E-selectin. Acts as a T-cell counter-receptor for SIGLEC1. Its function is as follows. Protects cells from apoptotic signals, promoting cell survival. In Rattus norvegicus (Rat), this protein is Leukosialin (Spn).